A 94-amino-acid chain; its full sequence is Sec-independent protein translocase protein TatA (94 aa).

The helical transmembrane segment at 1-21 threads the bilayer; the sequence is MFGRLGAPEIILILVVIILLF. The interval 44–94 is disordered; it reads AKAMKSEGQESTPAGPPNTDEQPPAQRTIQAAPGDVTSSRPVSEPTDTTKR. Residues 62–72 are compositionally biased toward polar residues; that stretch reads TDEQPPAQRTI.

Belongs to the TatA/E family. The Tat system comprises two distinct complexes: a TatABC complex, containing multiple copies of TatA, TatB and TatC subunits, and a separate TatA complex, containing only TatA subunits. Substrates initially bind to the TatABC complex, which probably triggers association of the separate TatA complex to form the active translocon.

Its subcellular location is the cell membrane. Functionally, part of the twin-arginine translocation (Tat) system that transports large folded proteins containing a characteristic twin-arginine motif in their signal peptide across membranes. TatA could form the protein-conducting channel of the Tat system. This is Sec-independent protein translocase protein TatA from Streptomyces avermitilis (strain ATCC 31267 / DSM 46492 / JCM 5070 / NBRC 14893 / NCIMB 12804 / NRRL 8165 / MA-4680).